A 433-amino-acid chain; its full sequence is D-amino acid dehydrogenase (433 aa).

FAD is bound at residue 3 to 17; it reads VLVLGSGVIGTTSAY.

Belongs to the DadA oxidoreductase family. The cofactor is FAD.

The catalysed reaction is a D-alpha-amino acid + A + H2O = a 2-oxocarboxylate + AH2 + NH4(+). It participates in amino-acid degradation; D-alanine degradation; NH(3) and pyruvate from D-alanine: step 1/1. Oxidative deamination of D-amino acids. This chain is D-amino acid dehydrogenase, found in Pseudomonas syringae pv. syringae (strain B728a).